A 769-amino-acid polypeptide reads, in one-letter code: P-selectin (769 aa).

Positions 1 to 32 (MASCPKAIWSWRFQRVVFRSVQLLCFSILIFE) are cleaved as a signal peptide. The Extracellular portion of the chain corresponds to 33–717 (LMTQKEVSAW…QEALTYIGGA (685 aa)). Asn-54 and Asn-80 each carry an N-linked (GlcNAc...) asparagine glycan. Positions 58–158 (AFCQKYYTDL…PCGKRKRALC (101 aa)) constitute a C-type lectin domain. Disulfide bonds link Cys-60–Cys-158, Cys-131–Cys-150, Cys-163–Cys-174, Cys-168–Cys-183, Cys-185–Cys-194, Cys-200–Cys-244, Cys-230–Cys-257, Cys-262–Cys-306, Cys-292–Cys-319, Cys-324–Cys-368, Cys-354–Cys-381, Cys-386–Cys-430, Cys-416–Cys-443, Cys-448–Cys-492, Cys-478–Cys-505, Cys-510–Cys-554, Cys-540–Cys-567, Cys-581–Cys-625, Cys-611–Cys-638, Cys-643–Cys-687, and Cys-673–Cys-700. Residues Glu-121, Asn-123, and Asn-124 each coordinate Ca(2+). Asn-123 lines the a carbohydrate pocket. Residues Glu-133 and Asn-146 each contribute to the a carbohydrate site. Positions 146 and 147 each coordinate Ca(2+). An EGF-like domain is found at 159–195 (YRASCQDMSCSKQGECIETIGNYTCSCYPGFYGPECE). Asn-180 is a glycosylation site (N-linked (GlcNAc...) asparagine). Sushi domains lie at 198–259 (RECG…QCVA), 260–321 (VQCP…VCKA), 322–383 (IACE…VCQA), 384–445 (LQCQ…ECQA), 446–507 (VTCA…TCEA), 508–569 (SKCP…SCKV), 579–640 (LRCP…TCRA), and 641–702 (VKCS…TCQA). N-linked (GlcNAc...) asparagine glycans are attached at residues Asn-212 and Asn-219. The N-linked (GlcNAc...) asparagine glycan is linked to Asn-347. A glycan (N-linked (GlcNAc...) asparagine) is linked at Asn-398. N-linked (GlcNAc...) asparagine glycosylation is present at Asn-604. Asn-655, Asn-662, and Asn-680 each carry an N-linked (GlcNAc...) asparagine glycan. The chain crosses the membrane as a helical span at residues 718-734 (AAGTTGLVTSSILLALL). Residues 735–769 (RRRRRQKDDGKSPLNPQSHLGTYGVFTNAAFDPSP) are Cytoplasmic-facing. Residues 740 to 769 (QKDDGKSPLNPQSHLGTYGVFTNAAFDPSP) form a disordered region. Positions 757-760 (YGVF) match the Endocytosis signal motif. The segment at 760–769 (FTNAAFDPSP) is interaction with SNX17.

This sequence belongs to the selectin/LECAM family. In terms of assembly, interacts with SNX17. Interacts with SELPLG/PSGL1 and PODXL2 and mediates neutrophil adhesion and leukocyte rolling. This interaction requires the sialyl-Lewis X epitope of SELPLG and PODXL2, and specific tyrosine sulfation on SELPLG. Interacts (via C-type lectin domain) with alpha-IIb/beta3 integrin ITGA2B:ITGB3 and alpha-V/beta-3 integrin ITGAV:ITGB3. Interacts with alpha5/beta1 integrin ITGA5:ITGB1 and alpha4/beta1 integrin ITGA4:ITGB.

The protein localises to the cell membrane. Its function is as follows. Ca(2+)-dependent receptor for myeloid cells that binds to carbohydrates on neutrophils and monocytes. Mediates the interaction of activated endothelial cells or platelets with leukocytes. The ligand recognized is sialyl-Lewis X. Mediates rapid rolling of leukocyte rolling over vascular surfaces during the initial steps in inflammation through interaction with SELPLG. Mediates cell-cell interactions and cell adhesion via the interaction with integrin alpha-IIb/beta3 (ITGA2B:ITGB3) and integrin alpha-V/beta-3 (ITGAV:ITGB3). This chain is P-selectin (SELP), found in Ovis aries (Sheep).